We begin with the raw amino-acid sequence, 204 residues long: uncharacterized protein (204 aa).

This is an uncharacterized protein from Acinetobacter calcoaceticus.